The primary structure comprises 254 residues: NAD kinase (254 aa).

The Proton acceptor role is filled by aspartate 44. NAD(+)-binding positions include 44-45 (DG), 114-115 (NE), aspartate 144, alanine 152, 155-160 (TAYNYS), and alanine 179.

It belongs to the NAD kinase family. A divalent metal cation is required as a cofactor.

The protein resides in the cytoplasm. The catalysed reaction is NAD(+) + ATP = ADP + NADP(+) + H(+). Its function is as follows. Involved in the regulation of the intracellular balance of NAD and NADP, and is a key enzyme in the biosynthesis of NADP. Catalyzes specifically the phosphorylation on 2'-hydroxyl of the adenosine moiety of NAD to yield NADP. In Cereibacter sphaeroides (strain ATCC 17023 / DSM 158 / JCM 6121 / CCUG 31486 / LMG 2827 / NBRC 12203 / NCIMB 8253 / ATH 2.4.1.) (Rhodobacter sphaeroides), this protein is NAD kinase.